The chain runs to 153 residues: HTH-type transcriptional regulator Zrp (153 aa).

The region spanning 2-63 (IDYRDRHILS…LLDRKKINLP (62 aa)) is the HTH asnC-type domain. Residues 21-40 (LAEIAERVALSVSACSRRVA) constitute a DNA-binding region (H-T-H motif).

The polypeptide is HTH-type transcriptional regulator Zrp (zrp) (Zymomonas mobilis subsp. mobilis (strain ATCC 10988 / DSM 424 / LMG 404 / NCIMB 8938 / NRRL B-806 / ZM1)).